The sequence spans 162 residues: Transcription elongation factor GreA (162 aa).

The stretch at 45 to 74 (ENAEYEAAREKQAFIEGRIKELEDMTARAE) forms a coiled coil.

The protein belongs to the GreA/GreB family.

Functionally, necessary for efficient RNA polymerase transcription elongation past template-encoded arresting sites. The arresting sites in DNA have the property of trapping a certain fraction of elongating RNA polymerases that pass through, resulting in locked ternary complexes. Cleavage of the nascent transcript by cleavage factors such as GreA or GreB allows the resumption of elongation from the new 3'terminus. GreA releases sequences of 2 to 3 nucleotides. In Rickettsia felis (strain ATCC VR-1525 / URRWXCal2) (Rickettsia azadi), this protein is Transcription elongation factor GreA.